Consider the following 423-residue polypeptide: MLDVKFIRDNLDQAEAALATRGGAISLARFRELDAQRRKLLTESETLKALKNSVSEEIAKVKDKSTVKDKIAEMKEVSAKIKTFDDELKIVEEEFDTLLMTIPNLPHPTTPVGKSEEENVIVRSWGSLPEMAFEPKPHWDLAEDLDILDFERATKITGARFCLSKRAGARLERALISFMLDLHSTEHGYTEVLPPFMVNRASMTGTGQLPKFEEDLFRLMDPEYFLIPTAEVPVTNIHRDEILKKSDLPISYTAYTPCFRREAGSYGKDTRGLIRQHQFNKVELVKFVHPDESQAELEKLTGHAEKVLQLLELPYRVMALCSGDIGFSACKTYDLEVWLPSQNTYREISSCSSFGDFQARRAGIRFREDEKSKPEFVHTLNGSGLAVGRTLVAILENYQQADGSIIIPTALRPYMGGIEKITK.

229-231 (TAE) lines the L-serine pocket. Residue 260-262 (RRE) coordinates ATP. Glu283 lines the L-serine pocket. 347–350 (EISS) contributes to the ATP binding site. Ser383 is a binding site for L-serine.

This sequence belongs to the class-II aminoacyl-tRNA synthetase family. Type-1 seryl-tRNA synthetase subfamily. Homodimer. The tRNA molecule binds across the dimer.

The protein localises to the cytoplasm. It catalyses the reaction tRNA(Ser) + L-serine + ATP = L-seryl-tRNA(Ser) + AMP + diphosphate + H(+). The catalysed reaction is tRNA(Sec) + L-serine + ATP = L-seryl-tRNA(Sec) + AMP + diphosphate + H(+). It participates in aminoacyl-tRNA biosynthesis; selenocysteinyl-tRNA(Sec) biosynthesis; L-seryl-tRNA(Sec) from L-serine and tRNA(Sec): step 1/1. Catalyzes the attachment of serine to tRNA(Ser). Is also able to aminoacylate tRNA(Sec) with serine, to form the misacylated tRNA L-seryl-tRNA(Sec), which will be further converted into selenocysteinyl-tRNA(Sec). In Trichlorobacter lovleyi (strain ATCC BAA-1151 / DSM 17278 / SZ) (Geobacter lovleyi), this protein is Serine--tRNA ligase.